The chain runs to 627 residues: Alpha-terpineol synthase, chloroplastic (627 aa).

A chloroplast-targeting transit peptide spans 1-53 (MAGITGVMNMKLAARPSSGRHSRGCRPAVVPSAGKQMLLVRRHPPGSASWPTR). The tract at residues 13–90 (AARPSSGRHS…EDRASRNTSS (78 aa)) is disordered. (2E)-geranyl diphosphate-binding residues include arginine 339, aspartate 376, aspartate 380, arginine 518, and aspartate 521. Residues aspartate 376 and aspartate 380 each contribute to the Mg(2+) site. The DDXXD motif motif lies at 376–380 (DDTYD). Mg(2+) is bound by residues aspartate 521, serine 525, and glutamate 529.

It belongs to the terpene synthase family. Tpsb subfamily. Monomer. Requires Mg(2+) as cofactor. It depends on Mn(2+) as a cofactor. As to expression, expressed in seedling leaf sheaths and roots.

The protein resides in the plastid. It localises to the chloroplast. The enzyme catalyses (2E)-geranyl diphosphate + H2O = (S)-alpha-terpineol + diphosphate. The catalysed reaction is (2E)-geranyl diphosphate = (4S)-limonene + diphosphate. It carries out the reaction (2E)-geranyl diphosphate = gamma-terpinene + diphosphate. It catalyses the reaction (2E)-geranyl diphosphate = beta-myrcene + diphosphate. The enzyme catalyses (2E)-geranyl diphosphate = terpinolene + diphosphate. The catalysed reaction is (2E)-geranyl diphosphate + H2O = 4-terpineol + diphosphate. It functions in the pathway secondary metabolite biosynthesis; terpenoid biosynthesis. Component of the volatile terpenes biosynthesis pathways. Mediates the synthesis of a blend of monoterpenes. Converts mainly geranyl diphosphate to alpha-terpineol. Also triggers the biosynthesis of minor monoterpenes including limonene, gamma-terpinene, beta-myrcene, terpinolene and 4-terpineol. The protein is Alpha-terpineol synthase, chloroplastic of Zea mays (Maize).